The sequence spans 63 residues: Large ribosomal subunit protein eL37 (63 aa).

Zn(2+)-binding residues include cysteine 20, cysteine 23, cysteine 35, and cysteine 38. A C4-type zinc finger spans residues 20–38 (CRRCGRHSFNVRKGYCVAC).

It belongs to the eukaryotic ribosomal protein eL37 family. Requires Zn(2+) as cofactor.

Functionally, binds to the 23S rRNA. This is Large ribosomal subunit protein eL37 from Ignicoccus hospitalis (strain KIN4/I / DSM 18386 / JCM 14125).